The primary structure comprises 387 residues: MKQAVIVDCIRTPMGRSKAGVFRNVRAETLSAELMKALLIRNPQLDPSLIEDVIWGCVQQTLEQGFNIARNASLLAGIPKTAGAVTVNRLCGSSMDAIHQAARAIMTGMGDTFIIGGVEHMGHVPMNHGVDFHPGLANRVAKASGMMGLTAEMLGKMHGISREQQDAFAVRSHQRAHAATVEGRFAKEIWAMEGHDANGALIKVMHDEVIRPETTMESLAGLRPVFDPANGTVTAGTSSALSDGASAMLVMEESKARALGLPIRARIRSMAVAGCDAAIMGYGPVPATQKALARAGLTVADLDVIELNEAFAAQSLPCVKDLGLQDVVEEKINLNGGAIALGHPLGCSGARISTTLINLMEEKDATIGLATMCIGLGQGIATVFERV.

C91 acts as the Acyl-thioester intermediate in catalysis. Catalysis depends on proton acceptor residues H343 and C373.

This sequence belongs to the thiolase-like superfamily. Thiolase family. Heterotetramer of two alpha chains (FadB) and two beta chains (FadA).

Its subcellular location is the cytoplasm. It carries out the reaction an acyl-CoA + acetyl-CoA = a 3-oxoacyl-CoA + CoA. Its pathway is lipid metabolism; fatty acid beta-oxidation. Functionally, catalyzes the final step of fatty acid oxidation in which acetyl-CoA is released and the CoA ester of a fatty acid two carbons shorter is formed. This chain is 3-ketoacyl-CoA thiolase, found in Shewanella denitrificans (strain OS217 / ATCC BAA-1090 / DSM 15013).